A 904-amino-acid chain; its full sequence is Protein translocase subunit SecA (904 aa).

ATP is bound by residues Q87, G105–T109, and D512. Residues L851 to E870 are disordered. 4 residues coordinate Zn(2+): C888, C890, C899, and H900.

It belongs to the SecA family. In terms of assembly, monomer and homodimer. Part of the essential Sec protein translocation apparatus which comprises SecA, SecYEG and auxiliary proteins SecDF-YajC and YidC. It depends on Zn(2+) as a cofactor.

It is found in the cell inner membrane. The protein localises to the cytoplasm. The catalysed reaction is ATP + H2O + cellular proteinSide 1 = ADP + phosphate + cellular proteinSide 2.. Its function is as follows. Part of the Sec protein translocase complex. Interacts with the SecYEG preprotein conducting channel. Has a central role in coupling the hydrolysis of ATP to the transfer of proteins into and across the cell membrane, serving both as a receptor for the preprotein-SecB complex and as an ATP-driven molecular motor driving the stepwise translocation of polypeptide chains across the membrane. The sequence is that of Protein translocase subunit SecA from Yersinia pseudotuberculosis serotype O:1b (strain IP 31758).